Here is a 165-residue protein sequence, read N- to C-terminus: MVDVQTQRKQIEKLISLNRVTKVVKGGRRFSFAAFMVVGDGEGHVGWGFGKANDASDAIKKSLTSARKNLRFVSIRKGTLPHEVIGCFKKAKVLIKPATHGTGVIAGGPVRAVMEALGVHDILSKSLGSNNSMNVVKATFKAFDLVLNAEKVAEMRGKTLKTLWG.

Residues Gln10–Val73 form the S5 DRBM domain.

It belongs to the universal ribosomal protein uS5 family. Part of the 30S ribosomal subunit. Contacts proteins S4 and S8.

Its function is as follows. With S4 and S12 plays an important role in translational accuracy. Located at the back of the 30S subunit body where it stabilizes the conformation of the head with respect to the body. In Borreliella afzelii (strain PKo) (Borrelia afzelii), this protein is Small ribosomal subunit protein uS5.